A 241-amino-acid polypeptide reads, in one-letter code: Phosphoribosylaminoimidazole-succinocarboxamide synthase (241 aa).

Belongs to the SAICAR synthetase family.

The enzyme catalyses 5-amino-1-(5-phospho-D-ribosyl)imidazole-4-carboxylate + L-aspartate + ATP = (2S)-2-[5-amino-1-(5-phospho-beta-D-ribosyl)imidazole-4-carboxamido]succinate + ADP + phosphate + 2 H(+). It functions in the pathway purine metabolism; IMP biosynthesis via de novo pathway; 5-amino-1-(5-phospho-D-ribosyl)imidazole-4-carboxamide from 5-amino-1-(5-phospho-D-ribosyl)imidazole-4-carboxylate: step 1/2. The chain is Phosphoribosylaminoimidazole-succinocarboxamide synthase from Caldivirga maquilingensis (strain ATCC 700844 / DSM 13496 / JCM 10307 / IC-167).